A 291-amino-acid polypeptide reads, in one-letter code: Translocon-associated protein subunit alpha (291 aa).

An N-terminal signal peptide occupies residues 1-20 (MRLLPRLLLLLLLVFPATVL). The Lumenal segment spans residues 21 to 207 (FRGGPRGSLA…EREDGLDGET (187 aa)). Residues 34–83 (DLTEDEETVEDSIIEDEDDEAEVEEDEPTDLVEDKEEEDVSGEPEASPSA) form a disordered region. Over residues 35–75 (LTEDEETVEDSIIEDEDDEAEVEEDEPTDLVEDKEEEDVSG) the composition is skewed to acidic residues. 2 N-linked (GlcNAc...) asparagine glycosylation sites follow: N136 and N191. The helical transmembrane segment at 208 to 228 (IFMYMFLAGLGLLVIVGLHQL) threads the bilayer. The Cytoplasmic portion of the chain corresponds to 229–291 (LESRKRKRPV…AQKRSVGSDE (63 aa)). Position 247 is a phosphoserine (S247). A Phosphothreonine modification is found at T260. Positions 263 to 291 (QIMQSRRDKASPRRLPRKRAQKRSVGSDE) are disordered. At S273 the chain carries Phosphoserine. Basic residues predominate over residues 274–284 (PRRLPRKRAQK).

Belongs to the TRAP-alpha family. Heterotetramer of TRAP-alpha, TRAP-beta, TRAP-delta and TRAP-gamma. Interacts with palmitoylated calnexin (CALX), the interaction is required for efficient folding of glycosylated proteins. Phosphorylated in its cytoplasmic tail.

Its subcellular location is the endoplasmic reticulum membrane. TRAP proteins are part of a complex whose function is to bind calcium to the ER membrane and thereby regulate the retention of ER resident proteins. May be involved in the recycling of the translocation apparatus after completion of the translocation process or may function as a membrane-bound chaperone facilitating folding of translocated proteins. This Pongo abelii (Sumatran orangutan) protein is Translocon-associated protein subunit alpha (SSR1).